The primary structure comprises 331 residues: HTH-type transcriptional regulator RipA (331 aa).

In terms of domain architecture, HTH araC/xylS-type spans 112-209; sequence RAVAQVLVSN…GATPSTFTTG (98 aa). 2 consecutive DNA-binding regions (H-T-H motif) follow at residues 129–150 and 176–199; these read EEFA…LKST and ISVV…RRHT.

Under iron limitation, RipA negatively controls the expression of the acn (aconitase), catA (catechol 1,2 dioxygenase), leuCD (isopropylmalate dehydratase), narKGHJI (nitrite/nitrate transporter and nitrate reductase), sdhCAB (succinate dehydrogenase), pta (phosphotransacetylase) and katA (catalase) genes. Binds to the consensus sequence in the promoter region. This Corynebacterium glutamicum (strain ATCC 13032 / DSM 20300 / JCM 1318 / BCRC 11384 / CCUG 27702 / LMG 3730 / NBRC 12168 / NCIMB 10025 / NRRL B-2784 / 534) protein is HTH-type transcriptional regulator RipA.